The sequence spans 143 residues: Nucleoside diphosphate kinase (143 aa).

Lys11, Phe59, Arg87, Thr93, Arg104, and Asn114 together coordinate ATP. Catalysis depends on His117, which acts as the Pros-phosphohistidine intermediate.

The protein belongs to the NDK family. As to quaternary structure, homotetramer. Mg(2+) is required as a cofactor.

Its subcellular location is the cytoplasm. It catalyses the reaction a 2'-deoxyribonucleoside 5'-diphosphate + ATP = a 2'-deoxyribonucleoside 5'-triphosphate + ADP. It carries out the reaction a ribonucleoside 5'-diphosphate + ATP = a ribonucleoside 5'-triphosphate + ADP. Functionally, major role in the synthesis of nucleoside triphosphates other than ATP. The ATP gamma phosphate is transferred to the NDP beta phosphate via a ping-pong mechanism, using a phosphorylated active-site intermediate. The chain is Nucleoside diphosphate kinase from Shewanella pealeana (strain ATCC 700345 / ANG-SQ1).